Consider the following 691-residue polypeptide: Pentatricopeptide repeat-containing protein ATP4, chloroplastic (691 aa).

Residues 1–17 (MASLPLCRSPSSLLPSW) are compositionally biased toward low complexity. The transit peptide at 1–35 (MASLPLCRSPSSLLPSWPHRPISASFNPKNPSSPV) directs the protein to the chloroplast. A disordered region spans residues 1 to 76 (MASLPLCRSP…SSNTRFLWVN (76 aa)). A compositionally biased stretch (polar residues) spans 24 to 33 (ASFNPKNPSS). Residues 45-56 (PPQPQDPSPPSD) show a composition bias toward pro residues. Positions 61–76 (GTRPSSSSNTRFLWVN) are enriched in polar residues. PPR repeat units follow at residues 163–197 (KVIL…GVQP), 198–232 (DNAT…GCSP), 233–267 (DMLT…KWQL), 268–302 (DPVI…GVRP), 303–337 (NLVV…QVQP), 338–372 (SRAT…AMGI), 373–403 (DVML…MKAS), 411–445 (DSWS…GFKP), 446–480 (NIFV…GIIP), and 546–580 (KMPY…GIYA). The 86-residue stretch at 592 to 677 (LHLRGLSVGA…WFLTTNVAAK (86 aa)) folds into the Smr domain.

The protein belongs to the PPR family. P subfamily.

It is found in the plastid. The protein resides in the chloroplast stroma. Functionally, involved in translation and accumulation of chloroplast ATP synthase subunits. Interacts with the 5'-UTR of the chloroplast bicistronic atpB and atpE mRNA and activates its translation by facilitating ribosome association with the mRNA. Required for accumulation and activity of the chloroplast ATP synthase. Enhances atpA translation and is required for accumulation of specific processed atpF and psaJ transcripts. Required for the stabilization of bicistronic rpl16 and rpl14 mRNAs. This Zea mays (Maize) protein is Pentatricopeptide repeat-containing protein ATP4, chloroplastic.